The chain runs to 213 residues: Small ribosomal subunit protein uS3 (213 aa).

The KH type-2 domain maps to 38–106 (IRKYVKKTLY…EFSIEVNEIR (69 aa)).

It belongs to the universal ribosomal protein uS3 family. Part of the 30S ribosomal subunit. Forms a tight complex with proteins S10 and S14.

Binds the lower part of the 30S subunit head. Binds mRNA in the 70S ribosome, positioning it for translation. The protein is Small ribosomal subunit protein uS3 of Oleidesulfovibrio alaskensis (strain ATCC BAA-1058 / DSM 17464 / G20) (Desulfovibrio alaskensis).